The primary structure comprises 129 residues: uncharacterized protein (129 aa).

A signal peptide spans 1 to 17 (MCPECFFLMLFFCGYRA). The segment covering 26–36 (SSSSSSSFRSS) has biased composition (low complexity). The interval 26 to 76 (SSSSSSSFRSSPAYGFSGRPPGGAGCRERSQRSCLRPGGLPSLTRNPGLQR) is disordered.

This is an uncharacterized protein from Escherichia coli O157:H7.